Reading from the N-terminus, the 188-residue chain is Holliday junction branch migration complex subunit RuvA (188 aa).

Residues 1–62 form a domain I region; sequence MIVGVRGVLV…EDAQLLYGFL (62 aa). The tract at residues 63–135 is domain II; it reads ELGEKKLFER…LSGFDTELII (73 aa). The flexible linker stretch occupies residues 135 to 139; the sequence is ISASE. The tract at residues 140–188 is domain III; that stretch reads PKSLAVAQASEALESLGFKKDKISKALGSCSAVDTAILVKEALKLLQTI.

This sequence belongs to the RuvA family. In terms of assembly, homotetramer. Forms an RuvA(8)-RuvB(12)-Holliday junction (HJ) complex. HJ DNA is sandwiched between 2 RuvA tetramers; dsDNA enters through RuvA and exits via RuvB. An RuvB hexamer assembles on each DNA strand where it exits the tetramer. Each RuvB hexamer is contacted by two RuvA subunits (via domain III) on 2 adjacent RuvB subunits; this complex drives branch migration. In the full resolvosome a probable DNA-RuvA(4)-RuvB(12)-RuvC(2) complex forms which resolves the HJ.

It is found in the cytoplasm. The RuvA-RuvB-RuvC complex processes Holliday junction (HJ) DNA during genetic recombination and DNA repair, while the RuvA-RuvB complex plays an important role in the rescue of blocked DNA replication forks via replication fork reversal (RFR). RuvA specifically binds to HJ cruciform DNA, conferring on it an open structure. The RuvB hexamer acts as an ATP-dependent pump, pulling dsDNA into and through the RuvAB complex. HJ branch migration allows RuvC to scan DNA until it finds its consensus sequence, where it cleaves and resolves the cruciform DNA. This Sulfurimonas denitrificans (strain ATCC 33889 / DSM 1251) (Thiomicrospira denitrificans (strain ATCC 33889 / DSM 1251)) protein is Holliday junction branch migration complex subunit RuvA.